A 212-amino-acid chain; its full sequence is COP9 signalosome complex subunit 8 (212 aa).

The PCI domain occupies 26-193 (TSLSAYEEQA…KPVVTAPPKD (168 aa)).

Belongs to the CSN8 family. As to quaternary structure, component of the COP9 signalosome (CSN) complex.

It localises to the cytoplasm. The protein localises to the nucleus. In terms of biological role, component of the COP9 signalosome (CSN) complex that acts as an regulator of the ubiquitin (Ubl) conjugation pathway by mediating the deneddylation of the cullin subunit of SCF-type E3 ubiquitin-protein ligase complexes. The CSN complex seems to link protein degradation to sexual development. The polypeptide is COP9 signalosome complex subunit 8 (csnH) (Emericella nidulans (strain FGSC A4 / ATCC 38163 / CBS 112.46 / NRRL 194 / M139) (Aspergillus nidulans)).